The following is an 824-amino-acid chain: Silver exporting P-type ATPase (824 aa).

Residues 89-112 (ASEHHHHHDHHEVSPDKIKQSHRQ) form a disordered region. The segment covering 98–112 (HHEVSPDKIKQSHRQ) has biased composition (basic and acidic residues). 6 consecutive transmembrane segments (helical) span residues 167–187 (FWLGLLLAFPVLILEMGSHLF), 200–220 (TWLQLLLASPVVLWCGWPFFA), 234–254 (FTLVAMGTGVAWVYSVIATVF), 268–288 (LVAIYFEAAAVITVLVLLGQV), 427–447 (WFVPLVILIAVVAFMIWSVWG), and 455–475 (GLIAAVSVLIIACPCALGLAT). The 4-aspartylphosphate intermediate role is filled by D511. 2 helical membrane passes run 764 to 784 (IRQNLFFAFIYNALGVPVAAG) and 785 to 805 (LLYPVYGILLSPVIAAAAMAL).

It belongs to the cation transport ATPase (P-type) (TC 3.A.3) family. Type IB subfamily.

It localises to the cell membrane. The enzyme catalyses Ag(+)(in) + ATP + H2O = Ag(+)(out) + ADP + phosphate + H(+). Component of the sil cation-efflux system that confers resistance to silver. The sequence is that of Silver exporting P-type ATPase (silP) from Salmonella typhimurium.